The chain runs to 602 residues: NAD-dependent protein deacetylase sir-2.1 (602 aa).

A disordered region spans residues 25 to 57 (PEIETMHIENSVEGESGRQRTESTASVNSESWQ). Residues 46 to 57 (ESTASVNSESWQ) are compositionally biased toward polar residues. One can recognise a Deacetylase sirtuin-type domain in the interval 119–374 (KLFTYNSLSD…RDICYALGGS (256 aa)). NAD(+) contacts are provided by residues 144–163 (GAGVSVSCGIPDFRSKDGIY) and 228–231 (QNID). Catalysis depends on H246, which acts as the Proton acceptor. Zn(2+) contacts are provided by C254, C257, C278, and C281. NAD(+) contacts are provided by residues 318 to 320 (GSS), 343 to 345 (NRE), and C360. Disordered regions lie at residues 411-468 (QERR…SDEV) and 520-551 (RNRHESDSSCESCSTVPGSDKSEANPLSRSQS).

This sequence belongs to the sirtuin family. Class I subfamily. In terms of assembly, interacts with ftt-2 and par-5. Interacts with daf-16 following heat-shock, which causes daf-16 to accumulate in the nucleus. Interaction with daf-16 is promoted by ftt-2. Zn(2+) serves as cofactor.

It localises to the nucleus. The catalysed reaction is N(6)-acetyl-L-lysyl-[protein] + NAD(+) + H2O = 2''-O-acetyl-ADP-D-ribose + nicotinamide + L-lysyl-[protein]. Its function is as follows. NAD-dependent deacetylase. Required for a reduction of the 'Lys-16' acetylation of histone H4 (H4K16ac) on dosage-compensated X chromosomes in hermaphrodites. Functions upstream of daf-16 in the insulin-like signaling pathway, promoting daf-16 mediated transcriptional activation and increased life-span. May also regulate life-span independently of daf-16 by modulating the transcription of genes involved in the stress response of the endoplasmic reticulum (ER). Acts upstream of the nicotinic acid metabolism pathway, which may be linked to the regulation of longevity. Plays a role in ascaroside-mediated longevity and stress resistance. The chain is NAD-dependent protein deacetylase sir-2.1 (sir-2.1) from Caenorhabditis briggsae.